The following is a 518-amino-acid chain: Zinc finger protein 449 (518 aa).

An SCAN box domain is found at 30–112 (RQRFRQFQYR…SLIEDLQREL (83 aa)). Residues 292–304 (NPTLGETPENSNL) are compositionally biased toward polar residues. The disordered stretch occupies residues 292–325 (NPTLGETPENSNLEEPLNPKPHKKKSPGEKPHRC). 7 C2H2-type zinc fingers span residues 323-345 (HRCPQCGKCFARKSQLTGHQRIH), 351-373 (HKCPECGKRFLRSSDLYRHQRLH), 379-401 (YECTVCKKRFTRRSHLIGHQRTH), 407-429 (YKCLECGKSFCHGSSLKRHLKTH), 435-457 (HRCHNCGKSFSRLTALTLHQRTH), 463-485 (FKCNYCGKSFRQRPSLVIHLRIH), and 491-513 (YKCTHCSKSFRQRAGLIMHQVTH).

This sequence belongs to the krueppel C2H2-type zinc-finger protein family.

The protein localises to the nucleus. May be involved in transcriptional regulation. The sequence is that of Zinc finger protein 449 (ZNF449) from Homo sapiens (Human).